A 216-amino-acid chain; its full sequence is Small ribosomal subunit protein uS3c (216 aa).

The 76-residue stretch at 43–118 (IKNYIQKNRR…KLNIAIVKVT (76 aa)) folds into the KH type-2 domain.

This sequence belongs to the universal ribosomal protein uS3 family. In terms of assembly, part of the 30S ribosomal subunit.

It localises to the plastid. The protein localises to the chloroplast. The polypeptide is Small ribosomal subunit protein uS3c (rps3) (Phaseolus angularis (Azuki bean)).